Consider the following 447-residue polypeptide: Selenide, water dikinase 3 (447 aa).

U50 is a catalytic residue. Position 50 (U50) is a non-standard amino acid, selenocysteine. ATP contacts are provided by residues K53, 103-105, D123, D146, and 197-200; these read GMD and GGQT. D105 is a binding site for Mg(2+). A Mg(2+)-binding site is contributed by D146. Residue D301 coordinates Mg(2+).

It belongs to the selenophosphate synthase 1 family. As to quaternary structure, homodimer. The cofactor is Mg(2+). In terms of tissue distribution, in the embryo, expressed in retina, olfactory vesicles, tectum, pronephros ducts and myotomes at 24 hours post-fertilization and in retina, tectum, liver and intestinal bulb 3 days after fertilization.

The catalysed reaction is hydrogenselenide + ATP + H2O = selenophosphate + AMP + phosphate + 2 H(+). In terms of biological role, synthesizes selenophosphate from selenide and ATP. The protein is Selenide, water dikinase 3 of Danio rerio (Zebrafish).